The primary structure comprises 205 residues: Holliday junction branch migration complex subunit RuvA (205 aa).

Residues 1–64 (MIAHLRGELV…EDALTLYGFL (64 aa)) form a domain I region. Residues 65 to 143 (TQAEYDLFEL…AVPAGGGGVP (79 aa)) form a domain II region. Residues 144-153 (DGLPVAVAPA) form a flexible linker region. The domain III stretch occupies residues 153–205 (AGDAWAEASEALIALGYSRGEAAAALARVRAEAGEAPSVETLVRLALKQLYRG).

This sequence belongs to the RuvA family. In terms of assembly, homotetramer. Forms an RuvA(8)-RuvB(12)-Holliday junction (HJ) complex. HJ DNA is sandwiched between 2 RuvA tetramers; dsDNA enters through RuvA and exits via RuvB. An RuvB hexamer assembles on each DNA strand where it exits the tetramer. Each RuvB hexamer is contacted by two RuvA subunits (via domain III) on 2 adjacent RuvB subunits; this complex drives branch migration. In the full resolvosome a probable DNA-RuvA(4)-RuvB(12)-RuvC(2) complex forms which resolves the HJ.

It is found in the cytoplasm. The RuvA-RuvB-RuvC complex processes Holliday junction (HJ) DNA during genetic recombination and DNA repair, while the RuvA-RuvB complex plays an important role in the rescue of blocked DNA replication forks via replication fork reversal (RFR). RuvA specifically binds to HJ cruciform DNA, conferring on it an open structure. The RuvB hexamer acts as an ATP-dependent pump, pulling dsDNA into and through the RuvAB complex. HJ branch migration allows RuvC to scan DNA until it finds its consensus sequence, where it cleaves and resolves the cruciform DNA. This Symbiobacterium thermophilum (strain DSM 24528 / JCM 14929 / IAM 14863 / T) protein is Holliday junction branch migration complex subunit RuvA.